Reading from the N-terminus, the 472-residue chain is Glutamate--tRNA ligase (472 aa).

The short motif at 8–18 (PSPTGFLHIGS) is the 'HIGH' region element. The 'KMSKS' region motif lies at 239 to 243 (KLSKR). K242 provides a ligand contact to ATP.

This sequence belongs to the class-I aminoacyl-tRNA synthetase family. Glutamate--tRNA ligase type 1 subfamily. Monomer.

The protein resides in the cytoplasm. It catalyses the reaction tRNA(Glu) + L-glutamate + ATP = L-glutamyl-tRNA(Glu) + AMP + diphosphate. Catalyzes the attachment of glutamate to tRNA(Glu) in a two-step reaction: glutamate is first activated by ATP to form Glu-AMP and then transferred to the acceptor end of tRNA(Glu). This Solibacter usitatus (strain Ellin6076) protein is Glutamate--tRNA ligase.